The primary structure comprises 345 residues: Acetylserotonin O-methyltransferase (345 aa).

Residues Tyr-147, Trp-164, Asp-210, Gly-235–Phe-237, and Arg-252 contribute to the S-adenosyl-L-methionine site. Catalysis depends on His-255, which acts as the Proton donor/acceptor. Residues Asp-256, Asn-302, and Gln-306 each contribute to the substrate site.

This sequence belongs to the class I-like SAM-binding methyltransferase superfamily. Cation-independent O-methyltransferase family. As to quaternary structure, homodimer. In terms of tissue distribution, expressed in the pineal gland (at protein level). In the retina, very low expression is found at the mRNA level, and not at the protein level.

It catalyses the reaction N-acetylserotonin + S-adenosyl-L-methionine = melatonin + S-adenosyl-L-homocysteine + H(+). It participates in aromatic compound metabolism; melatonin biosynthesis; melatonin from serotonin: step 1/2. Functionally, catalyzes the transfer of a methyl group onto N-acetylserotonin, producing melatonin (N-acetyl-5-methoxytryptamine). Does not show Acetylserotonin O-methyltransferase activity. This chain is Acetylserotonin O-methyltransferase (ASMT), found in Homo sapiens (Human).